The chain runs to 484 residues: Calcium uniporter protein, mitochondrial (484 aa).

Residues 1–33 constitute a mitochondrion transit peptide; it reads MGHVLGGTLLAANRLARPPAVVLGKPRVCCWRA. Topologically, residues 34–304 are mitochondrial matrix; the sequence is SPWPVIVSSA…CDLLAHKGAH (271 aa). Disordered stretches follow at residues 59–104 and 188–227; these read ARYE…KGRL and YTGGNKSNDGRREESNGNGSNVASYSGLGREGPSKGDTHW. Positions 61–82 are enriched in basic and acidic residues; that stretch reads YEARGRSTTQRKVDDRPWHRES. The segment covering 83–93 has biased composition (polar residues); the sequence is SGSLPKSTSPD. The chain crosses the membrane as a helical span at residues 305–326; the sequence is ALAKGGFAALAAWWGIVYYVTF. Topologically, residues 327-334 are mitochondrial intermembrane; sequence HTDMGWDL. The Selectivity filter motif lies at 332–340; that stretch reads WDLVEPITY. A helical transmembrane segment spans residues 335-355; the sequence is VEPITYLAGLASIMGGYLWFL. Glu-336 is a binding site for Ca(2+). Residues 356 to 484 lie on the Mitochondrial matrix side of the membrane; that stretch reads FISRDLSYKA…NEAAANVPGD (129 aa). Composition is skewed to basic and acidic residues over residues 426 to 435 and 452 to 462; these read KEVLEEEKGG and DHDHDHDHVSH. Residues 426–484 form a disordered region; the sequence is KEVLEEEKGGKARKREQEDEDGDGDDDHDHDHDHVSHGAELQGQDILHANEAAANVPGD.

This sequence belongs to the MCU (TC 1.A.77) family. In terms of assembly, homotetramer, assembles in a dimer or dimers configuration with two interfaces.

It is found in the mitochondrion inner membrane. It carries out the reaction Ca(2+)(in) = Ca(2+)(out). With respect to regulation, inhibited by ruthenium red or its derivative Ru360. Its function is as follows. Highly selective calcium channel localized to the inner mitochondrial membrane, which mediates calcium uptake into the mitochondrial matrix. Mitochondrial calcium homeostasis plays key roles in cellular physiology and regulates ATP production, cytoplasmic calcium signals and activation of cell death pathways. Sufficient to operate as a pore-forming channel without the need of calcium-sensor or auxiliary subunit. The polypeptide is Calcium uniporter protein, mitochondrial (Metarhizium acridum (strain CQMa 102)).